The sequence spans 478 residues: Proline--tRNA ligase (478 aa).

Belongs to the class-II aminoacyl-tRNA synthetase family. ProS type 3 subfamily. As to quaternary structure, homodimer.

The protein resides in the cytoplasm. It carries out the reaction tRNA(Pro) + L-proline + ATP = L-prolyl-tRNA(Pro) + AMP + diphosphate. In terms of biological role, catalyzes the attachment of proline to tRNA(Pro) in a two-step reaction: proline is first activated by ATP to form Pro-AMP and then transferred to the acceptor end of tRNA(Pro). The protein is Proline--tRNA ligase of Methanoregula boonei (strain DSM 21154 / JCM 14090 / 6A8).